Consider the following 491-residue polypeptide: Nucleoside transporter 1.1 (491 aa).

6 helical membrane-spanning segments follow: residues 27 to 47, 82 to 102, 109 to 129, 136 to 156, 173 to 193, and 209 to 229; these read FYVYVVAFMCGVSMMMPVNAV, YNLIGIVTSLIMEPLTLLSWF, VRLLGGLVILIVEIIVLMVVP, AGAVATICCTGFIGGFGKSIF, STMMGGVGMSGVLTSLLQIIV, and KIYYGLDVGIQGMTFVALILL. Residues 260 to 273 are compositionally biased toward basic and acidic residues; it reads CHTDEHPTHDKEGR. 2 disordered regions span residues 260 to 280 and 290 to 309; these read CHTDEHPTHDKEGRNSSSGKE and AAAKSEGPDAVEESSWPHEV. Residue asparagine 274 is glycosylated (N-linked (GlcNAc...) asparagine). Helical transmembrane passes span 333–353, 361–381, 395–415, 427–447, and 460–480; these read MFVACAFNFLITLFLFPGIAV, WFSTIAVFIFNVFDVLGRFSP, WIIVAASFARVIFVPLLLLHS, VMEVIFGFSNGYVGSMALVLG, and FVAGTLMGISILVGGTIGTVL.

This sequence belongs to the SLC29A/ENT transporter (TC 2.A.57) family.

Its subcellular location is the membrane. It carries out the reaction adenosine(in) + H(+)(in) = adenosine(out) + H(+)(out). The enzyme catalyses uridine(in) + H(+)(in) = uridine(out) + H(+)(out). In terms of biological role, sodium-independent high affinity nucleoside:H(+) symporter; transports adenosine and uridine. Can transport cytidine and thymidine. In Leishmania donovani, this protein is Nucleoside transporter 1.1.